We begin with the raw amino-acid sequence, 129 residues long: GEL complex subunit OPTI (129 aa).

Over 1-44 the chain is Cytoplasmic; the sequence is MSGGRRKEEPPQPQLANGALKVSVWSKVLRSDAAWEDKDEFLDV. Residues 45–65 form a helical membrane-spanning segment; the sequence is IYWFRQIIAVVLGVIWGVLPL. Residue Arg-66 is a topological domain, lumenal. A helical membrane pass occupies residues 67-84; it reads GFLGIAGFCVINAGVLYL. Topologically, residues 85 to 103 are cytoplasmic; sequence YFSNYLQIDEEEYGGTWEL. The chain crosses the membrane as a helical span at residues 104–127; sequence TKEGFMTSFALFMVIWIIFYTAIH. The Lumenal portion of the chain corresponds to 128 to 129; that stretch reads YD.

The protein belongs to the EMC6 family. As to quaternary structure, component of the GET- and EMC-like (GEL) complex, composed of RAB5IF/OPTI and TMCO1. The GEL complex is part of the multi-pass translocon (MPT) complex, composed of three subcomplexes, the GEL complex (composed of RAB5IF/OPTI and TMCO1), the BOS complex (composed of NCLN/Nicalin, NOMO1 and TMEM147) and the PAT complex (composed of WDR83OS/Asterix and CCDC47). The MPT complex associates with the SEC61 complex. Interacts with NDUFS3, NDUFA4, NDUFV1, NDUFA9 and NDUFS8 of the mitochondrial membrane respiratory chain NADH dehydrogenase (Complex I). Interacts with UQCRC2 of the ubiquinol-cytochrome c reductase complex (Complex III). Interacts with COX5A and COX7C of the cytochrome c oxidase complex (Complex IV).

It is found in the endoplasmic reticulum membrane. The protein localises to the mitochondrion inner membrane. Functionally, component of the multi-pass translocon (MPT) complex that mediates insertion of multi-pass membrane proteins into the lipid bilayer of membranes. The MPT complex takes over after the SEC61 complex: following membrane insertion of the first few transmembrane segments of proteins by the SEC61 complex, the MPT complex occludes the lateral gate of the SEC61 complex to promote insertion of subsequent transmembrane regions. Within the MPT complex, the GEL subcomplex may mediate insertion of transmembrane regions into the membrane. In addition to its role in multi-pass membrane insertion, RAB5IF/OPTI also acts as an assembly factor for mitochondrial respiratory complexes. This Canis lupus familiaris (Dog) protein is GEL complex subunit OPTI (RAB5IF).